Consider the following 490-residue polypeptide: Betaine aldehyde dehydrogenase (490 aa).

K(+) contacts are provided by Thr-26, Ile-27, and Asp-93. 150–152 contacts NAD(+); the sequence is GAW. Lys-162 acts as the Charge relay system in catalysis. 176-179 contributes to the NAD(+) binding site; it reads KPSE. A K(+)-binding site is contributed by Val-180. NAD(+) is bound at residue 230-233; the sequence is GVAS. K(+) is bound at residue Leu-246. Residue Glu-252 is the Proton acceptor of the active site. Positions 254, 286, and 387 each coordinate NAD(+). The active-site Nucleophile is Cys-286. Residue Cys-286 is modified to Cysteine sulfenic acid (-SOH). Residues Lys-457 and Gly-460 each contribute to the K(+) site. Catalysis depends on Glu-464, which acts as the Charge relay system.

It belongs to the aldehyde dehydrogenase family. In terms of assembly, dimer of dimers. Requires K(+) as cofactor.

It carries out the reaction betaine aldehyde + NAD(+) + H2O = glycine betaine + NADH + 2 H(+). It functions in the pathway amine and polyamine biosynthesis; betaine biosynthesis via choline pathway; betaine from betaine aldehyde: step 1/1. In terms of biological role, involved in the biosynthesis of the osmoprotectant glycine betaine. Catalyzes the irreversible oxidation of betaine aldehyde to the corresponding acid. The chain is Betaine aldehyde dehydrogenase from Escherichia coli O6:H1 (strain CFT073 / ATCC 700928 / UPEC).